A 90-amino-acid chain; its full sequence is Small ribosomal subunit protein uS15 (90 aa).

The protein belongs to the universal ribosomal protein uS15 family. In terms of assembly, part of the 30S ribosomal subunit. Forms a bridge to the 50S subunit in the 70S ribosome, contacting the 23S rRNA.

In terms of biological role, one of the primary rRNA binding proteins, it binds directly to 16S rRNA where it helps nucleate assembly of the platform of the 30S subunit by binding and bridging several RNA helices of the 16S rRNA. Functionally, forms an intersubunit bridge (bridge B4) with the 23S rRNA of the 50S subunit in the ribosome. The polypeptide is Small ribosomal subunit protein uS15 (Helicobacter pylori (strain HPAG1)).